The following is a 372-amino-acid chain: Lipoyl synthase, mitochondrial (372 aa).

[4Fe-4S] cluster contacts are provided by Cys103, Cys108, Cys114, Cys134, Cys138, Cys141, and Ser349. One can recognise a Radical SAM core domain in the interval 119–338 (EHGTQTATIM…EERGNQLGFL (220 aa)).

The protein belongs to the radical SAM superfamily. Lipoyl synthase family. The cofactor is [4Fe-4S] cluster.

Its subcellular location is the mitochondrion. The catalysed reaction is [[Fe-S] cluster scaffold protein carrying a second [4Fe-4S](2+) cluster] + N(6)-octanoyl-L-lysyl-[protein] + 2 oxidized [2Fe-2S]-[ferredoxin] + 2 S-adenosyl-L-methionine + 4 H(+) = [[Fe-S] cluster scaffold protein] + N(6)-[(R)-dihydrolipoyl]-L-lysyl-[protein] + 4 Fe(3+) + 2 hydrogen sulfide + 2 5'-deoxyadenosine + 2 L-methionine + 2 reduced [2Fe-2S]-[ferredoxin]. It functions in the pathway protein modification; protein lipoylation via endogenous pathway; protein N(6)-(lipoyl)lysine from octanoyl-[acyl-carrier-protein]: step 2/2. Catalyzes the radical-mediated insertion of two sulfur atoms into the C-6 and C-8 positions of the octanoyl moiety bound to the lipoyl domains of lipoate-dependent enzymes, thereby converting the octanoylated domains into lipoylated derivatives. The chain is Lipoyl synthase, mitochondrial from Drosophila willistoni (Fruit fly).